Consider the following 355-residue polypeptide: UDP-N-acetylglucosamine--N-acetylmuramyl-(pentapeptide) pyrophosphoryl-undecaprenol N-acetylglucosamine transferase (355 aa).

Residues 15 to 17, asparagine 127, arginine 163, serine 191, isoleucine 244, 263 to 268, and glutamine 288 each bind UDP-N-acetyl-alpha-D-glucosamine; these read TGG and ALTVSE.

This sequence belongs to the glycosyltransferase 28 family. MurG subfamily.

It is found in the cell inner membrane. It carries out the reaction di-trans,octa-cis-undecaprenyl diphospho-N-acetyl-alpha-D-muramoyl-L-alanyl-D-glutamyl-meso-2,6-diaminopimeloyl-D-alanyl-D-alanine + UDP-N-acetyl-alpha-D-glucosamine = di-trans,octa-cis-undecaprenyl diphospho-[N-acetyl-alpha-D-glucosaminyl-(1-&gt;4)]-N-acetyl-alpha-D-muramoyl-L-alanyl-D-glutamyl-meso-2,6-diaminopimeloyl-D-alanyl-D-alanine + UDP + H(+). Its pathway is cell wall biogenesis; peptidoglycan biosynthesis. Its function is as follows. Cell wall formation. Catalyzes the transfer of a GlcNAc subunit on undecaprenyl-pyrophosphoryl-MurNAc-pentapeptide (lipid intermediate I) to form undecaprenyl-pyrophosphoryl-MurNAc-(pentapeptide)GlcNAc (lipid intermediate II). The chain is UDP-N-acetylglucosamine--N-acetylmuramyl-(pentapeptide) pyrophosphoryl-undecaprenol N-acetylglucosamine transferase from Escherichia coli O9:H4 (strain HS).